The chain runs to 299 residues: tRNA pseudouridine synthase B (299 aa).

Aspartate 38 acts as the Nucleophile in catalysis.

This sequence belongs to the pseudouridine synthase TruB family. Type 1 subfamily.

It carries out the reaction uridine(55) in tRNA = pseudouridine(55) in tRNA. Functionally, responsible for synthesis of pseudouridine from uracil-55 in the psi GC loop of transfer RNAs. This is tRNA pseudouridine synthase B from Alkaliphilus oremlandii (strain OhILAs) (Clostridium oremlandii (strain OhILAs)).